Consider the following 2837-residue polypeptide: Probable polyketide synthase 3 (2837 aa).

The region spanning 39–464 is the Ketosynthase family 3 (KS3) domain; sequence NNGIGIIGIG…GSNVCIILKD (426 aa). Catalysis depends on for beta-ketoacyl synthase activity residues cysteine 209, histidine 348, and histidine 388. The segment at 664 to 697 is acyl/malonyl transferase; the sequence is GIKPTFIVGHSLGEVTAAYCSGMIDLETECYLIY. Residue serine 674 is the For acyl/malonyl transferase activity of the active site. Positions 962 to 1084 are N-terminal hotdog fold; sequence IDILGNSITD…GNFQLFKHNG (123 aa). Residues 962–1255 enclose the PKS/mFAS DH domain; that stretch reads IDILGNSITD…CTSLTPIQDS (294 aa). Histidine 995 functions as the Proton acceptor; for dehydratase activity in the catalytic mechanism. The interval 1106–1255 is C-terminal hotdog fold; sequence NLTKLTKEDL…CTSLTPIQDS (150 aa). The active-site Proton donor; for dehydratase activity is aspartate 1169. Positions 2330–2407 constitute a Carrier domain; sequence DNKNSVNQMF…SSIKIITNSL (78 aa). Position 2367 is an O-(pantetheine 4'-phosphoryl)serine (serine 2367). A helical transmembrane segment spans residues 2464-2484; that stretch reads KVILLSGSTGFLGGYLLLNLV.

It depends on pantetheine 4'-phosphate as a cofactor.

It is found in the membrane. Functionally, probable polyketide synthase. In Dictyostelium discoideum (Social amoeba), this protein is Probable polyketide synthase 3 (pks3).